We begin with the raw amino-acid sequence, 217 residues long: Neuron-specific vesicular protein calcyon (217 aa).

The tract at residues 1-25 (MVKLGCSFSGKPGKDPGDQDGAAMD) is disordered. At 1 to 87 (MVKLGCSFSG…EEGRRLPTAR (87 aa)) the chain is on the extracellular side. Asn73 is a glycosylation site (N-linked (GlcNAc...) asparagine). The chain crosses the membrane as a helical span at residues 88–108 (MIAFAMALLGCVLIMYKAIWY). At 109 to 217 (DQFTCPDGFL…AGSAAPPPAQ (109 aa)) the chain is on the cytoplasmic side. A disordered region spans residues 162-217 (PAAWGDGYRAAKEERKGPTQAGAAAAATEPPGKPSAKAEKEAARKAAGSAAPPPAQ).

This sequence belongs to the NSG family. As to quaternary structure, interacts with CLTA. Glycosylated. Expressed in the pyramidal cells of the prefrontal cortex, in hypothalamus and in caudate nucleus. No expression in spleen. Up-regulated in the prefrontal cortex of schizophrenic patients with nearly twice the levels of non-schizophrenics.

The protein resides in the cytoplasmic vesicle membrane. Its subcellular location is the cell membrane. Functionally, interacts with clathrin light chain A and stimulates clathrin self-assembly and clathrin-mediated endocytosis. In Homo sapiens (Human), this protein is Neuron-specific vesicular protein calcyon (CALY).